The chain runs to 304 residues: Porphobilinogen deaminase (304 aa).

At cysteine 240 the chain carries S-(dipyrrolylmethanemethyl)cysteine.

The protein belongs to the HMBS family. As to quaternary structure, monomer. Requires dipyrromethane as cofactor.

The catalysed reaction is 4 porphobilinogen + H2O = hydroxymethylbilane + 4 NH4(+). It participates in porphyrin-containing compound metabolism; protoporphyrin-IX biosynthesis; coproporphyrinogen-III from 5-aminolevulinate: step 2/4. Tetrapolymerization of the monopyrrole PBG into the hydroxymethylbilane pre-uroporphyrinogen in several discrete steps. The protein is Porphobilinogen deaminase of Xanthomonas oryzae pv. oryzae (strain MAFF 311018).